The following is a 335-amino-acid chain: Holliday junction branch migration complex subunit RuvB (335 aa).

Residues 1–183 (MDERIISSET…FGVIDHLEFY (183 aa)) are large ATPase domain (RuvB-L). Residues leucine 22, arginine 23, glycine 64, lysine 67, threonine 68, threonine 69, 130–132 (EDY), arginine 173, tyrosine 183, and arginine 220 contribute to the ATP site. Threonine 68 is a Mg(2+) binding site. Residues 184–254 (TEEQLTEIVL…LAKEALTLLQ (71 aa)) are small ATPAse domain (RuvB-S). Positions 257 to 335 (PRGLDTIDQK…HLGISYEKEV (79 aa)) are head domain (RuvB-H). 3 residues coordinate DNA: arginine 293, arginine 312, and arginine 317.

It belongs to the RuvB family. As to quaternary structure, homohexamer. Forms an RuvA(8)-RuvB(12)-Holliday junction (HJ) complex. HJ DNA is sandwiched between 2 RuvA tetramers; dsDNA enters through RuvA and exits via RuvB. An RuvB hexamer assembles on each DNA strand where it exits the tetramer. Each RuvB hexamer is contacted by two RuvA subunits (via domain III) on 2 adjacent RuvB subunits; this complex drives branch migration. In the full resolvosome a probable DNA-RuvA(4)-RuvB(12)-RuvC(2) complex forms which resolves the HJ.

The protein resides in the cytoplasm. The enzyme catalyses ATP + H2O = ADP + phosphate + H(+). The RuvA-RuvB-RuvC complex processes Holliday junction (HJ) DNA during genetic recombination and DNA repair, while the RuvA-RuvB complex plays an important role in the rescue of blocked DNA replication forks via replication fork reversal (RFR). RuvA specifically binds to HJ cruciform DNA, conferring on it an open structure. The RuvB hexamer acts as an ATP-dependent pump, pulling dsDNA into and through the RuvAB complex. RuvB forms 2 homohexamers on either side of HJ DNA bound by 1 or 2 RuvA tetramers; 4 subunits per hexamer contact DNA at a time. Coordinated motions by a converter formed by DNA-disengaged RuvB subunits stimulates ATP hydrolysis and nucleotide exchange. Immobilization of the converter enables RuvB to convert the ATP-contained energy into a lever motion, pulling 2 nucleotides of DNA out of the RuvA tetramer per ATP hydrolyzed, thus driving DNA branch migration. The RuvB motors rotate together with the DNA substrate, which together with the progressing nucleotide cycle form the mechanistic basis for DNA recombination by continuous HJ branch migration. Branch migration allows RuvC to scan DNA until it finds its consensus sequence, where it cleaves and resolves cruciform DNA. The polypeptide is Holliday junction branch migration complex subunit RuvB (Listeria innocua serovar 6a (strain ATCC BAA-680 / CLIP 11262)).